Reading from the N-terminus, the 390-residue chain is 3,5-dihydroxyphenylacetyl-CoA synthase (390 aa).

Cys173 is an active-site residue.

This sequence belongs to the thiolase-like superfamily. Chalcone/stilbene synthases family.

The enzyme catalyses 4 malonyl-CoA + 4 H(+) = (3,5-dihydroxyphenyl)acetyl-CoA + 4 CO2 + 3 CoA + H2O. Its pathway is antibiotic biosynthesis; vancomycin biosynthesis. Functionally, involved in the biosynthesis of the nonproteinogenic amino acid monomer (S)-3,5-dihydroxyphenylglycine (Dpg) responsible of the production of vancomycin and teicoplanin antibiotics. Catalyzes the Claisen condensation of four molecules of malonyl-CoA to yield 3,5-dihydroxyphenylacetyl-CoA (DPA-CoA) and three free coenzyme A (CoA). DpgA requires the presence of the dehydratases DpgB and DpgD to facilitate the aromatization of the DPA-S-DgpA or DPA-S-CoA intermediate. This is 3,5-dihydroxyphenylacetyl-CoA synthase from Streptomyces toyocaensis.